We begin with the raw amino-acid sequence, 329 residues long: UDP-N-acetylenolpyruvoylglucosamine reductase (329 aa).

In terms of domain architecture, FAD-binding PCMH-type spans 28-192 (RVGGPADLLC…ARVEVRLRPG (165 aa)). The active site involves arginine 172. A disordered region spans residues 204-225 (DRERRRATQPLDRPTFGSTFTN). Residue serine 221 is the Proton donor of the active site. Glutamate 291 is an active-site residue. The disordered stretch occupies residues 303 to 329 (LAGLDGHAADGGGPGAASGGARPREAT). Residues 311 to 320 (ADGGGPGAAS) are compositionally biased toward gly residues.

This sequence belongs to the MurB family. Requires FAD as cofactor.

It localises to the cytoplasm. The enzyme catalyses UDP-N-acetyl-alpha-D-muramate + NADP(+) = UDP-N-acetyl-3-O-(1-carboxyvinyl)-alpha-D-glucosamine + NADPH + H(+). It participates in cell wall biogenesis; peptidoglycan biosynthesis. Its function is as follows. Cell wall formation. This chain is UDP-N-acetylenolpyruvoylglucosamine reductase, found in Anaeromyxobacter dehalogenans (strain 2CP-C).